The primary structure comprises 414 residues: Glucose-1-phosphate adenylyltransferase (414 aa).

Alpha-D-glucose 1-phosphate contacts are provided by residues glycine 164, 184-185 (EK), and serine 204.

It belongs to the bacterial/plant glucose-1-phosphate adenylyltransferase family. In terms of assembly, homotetramer.

It catalyses the reaction alpha-D-glucose 1-phosphate + ATP + H(+) = ADP-alpha-D-glucose + diphosphate. The protein operates within glycan biosynthesis; glycogen biosynthesis. Involved in the biosynthesis of ADP-glucose, a building block required for the elongation reactions to produce glycogen. Catalyzes the reaction between ATP and alpha-D-glucose 1-phosphate (G1P) to produce pyrophosphate and ADP-Glc. The protein is Glucose-1-phosphate adenylyltransferase of Acidothermus cellulolyticus (strain ATCC 43068 / DSM 8971 / 11B).